Reading from the N-terminus, the 360-residue chain is Mannose-1-phosphate guanylyltransferase catalytic subunit beta (360 aa).

Positions 2 to 222 (KALILVGGYG…QGFWMDIGQP (221 aa)) are substrate-binding domain. GDP-alpha-D-mannose is bound at residue D110. D110 is a binding site for Mg(2+). K162 is a catalytic residue. A GDP-alpha-D-mannose-binding site is contributed by D218. The segment at 245–360 (YSGPGIVGNV…ESVPEPRIIM (116 aa)) is hexapeptide repeat domain.

It belongs to the transferase hexapeptide repeat family. As to quaternary structure, component of the GMPPA-GMPPB mannose-1-phosphate guanylyltransferase complex composed of 4 GMPPA subunits and 8 GMPPB subunits; the complex is organized into three layers, a central layer made up of 2 GMPPA dimers sandwiched between two layers each made up of 2 GMPPB dimers. GMPPB catalytic activity is reduced when part of the complex and binding of GDP-alpha-D-Mannose by GMPPA induces allosteric feedback inhibition of GMPPB. Mg(2+) is required as a cofactor.

Its subcellular location is the cytoplasm. The enzyme catalyses alpha-D-mannose 1-phosphate + GTP + H(+) = GDP-alpha-D-mannose + diphosphate. Its pathway is nucleotide-sugar biosynthesis; GDP-alpha-D-mannose biosynthesis; GDP-alpha-D-mannose from alpha-D-mannose 1-phosphate (GTP route): step 1/1. With respect to regulation, enzyme activity is reduced by incorporation into the GMPPA-GMPPB mannose-1-phosphate guanylyltransferase complex. Allosterically inhibited, when part of the GMPPA-GMPPB complex, by GDP-alpha-D-mannose binding to GMPPA. Its function is as follows. Catalytic subunit of the GMPPA-GMPPB mannose-1-phosphate guanylyltransferase complex. Catalyzes the formation of GDP-mannose, an essential precursor of glycan moieties of glycoproteins and glycolipids. Can catalyze the reverse reaction in vitro. Together with GMPPA regulates GDP-alpha-D-mannose levels. In Mus musculus (Mouse), this protein is Mannose-1-phosphate guanylyltransferase catalytic subunit beta.